The chain runs to 682 residues: Penicillin-binding protein activator LpoA (682 aa).

Positions 1-26 are cleaved as a signal peptide; it reads MLPLNSVRTHAGRLVPVMLAALFLAG. A lipid anchor (N-palmitoyl cysteine) is attached at Cys27. Cys27 carries the S-diacylglycerol cysteine lipid modification. 2 disordered regions span residues 240 to 262 and 314 to 341; these read AKQL…TGET and ANNA…VSPT. The segment covering 248-262 has biased composition (low complexity); it reads GGTPPAAAAPTTGET.

The protein belongs to the LpoA family. In terms of assembly, interacts with PBP1a.

Its subcellular location is the cell outer membrane. In terms of biological role, regulator of peptidoglycan synthesis that is essential for the function of penicillin-binding protein 1A (PBP1a). This Dickeya chrysanthemi (strain Ech1591) (Dickeya zeae (strain Ech1591)) protein is Penicillin-binding protein activator LpoA.